The following is a 959-amino-acid chain: Glycine dehydrogenase (decarboxylating) (959 aa).

Lys704 bears the N6-(pyridoxal phosphate)lysine mark.

It belongs to the GcvP family. As to quaternary structure, the glycine cleavage system is composed of four proteins: P, T, L and H. It depends on pyridoxal 5'-phosphate as a cofactor.

It catalyses the reaction N(6)-[(R)-lipoyl]-L-lysyl-[glycine-cleavage complex H protein] + glycine + H(+) = N(6)-[(R)-S(8)-aminomethyldihydrolipoyl]-L-lysyl-[glycine-cleavage complex H protein] + CO2. Its function is as follows. The glycine cleavage system catalyzes the degradation of glycine. The P protein binds the alpha-amino group of glycine through its pyridoxal phosphate cofactor; CO(2) is released and the remaining methylamine moiety is then transferred to the lipoamide cofactor of the H protein. This is Glycine dehydrogenase (decarboxylating) from Parasynechococcus marenigrum (strain WH8102).